The primary structure comprises 310 residues: Homoserine kinase (310 aa).

91 to 101 (PIGSGLGSSAC) provides a ligand contact to ATP.

Belongs to the GHMP kinase family. Homoserine kinase subfamily.

Its subcellular location is the cytoplasm. The catalysed reaction is L-homoserine + ATP = O-phospho-L-homoserine + ADP + H(+). Its pathway is amino-acid biosynthesis; L-threonine biosynthesis; L-threonine from L-aspartate: step 4/5. In terms of biological role, catalyzes the ATP-dependent phosphorylation of L-homoserine to L-homoserine phosphate. This Escherichia coli O6:K15:H31 (strain 536 / UPEC) protein is Homoserine kinase.